The primary structure comprises 93 residues: Stromal cell-derived factor 1 (93 aa).

The N-terminal stretch at 1-21 (MDAKVVAVLALVLAALCLSDG) is a signal peptide. A Receptor activation motif motif is present at residues 22–23 (KP). The receptor and heparin binding stretch occupies residues 29-33 (RCPCR). 2 cysteine pairs are disulfide-bonded: cysteine 30–cysteine 55 and cysteine 32–cysteine 71. Receptor binding regions lie at residues 39–41 (VAR), 48–50 (KIL), and 60–70 (VARLKNNNRQV). Heparin-binding positions include 41 to 51 (RANVKHLKILN), arginine 62, glutamine 69, and lysine 85.

It belongs to the intercrine alpha (chemokine CxC) family. As to quaternary structure, monomer or homodimer; in equilibrium. Dimer formation is induced by non acidic pH and the presence of multivalent anions, and by binding to CXCR4 or heparin. Monomeric form is required for full chemotactic activity and resistance to ischemia/reperfusion injury, whereas the dimeric form acts as a partial agonist of CXCR4, stimulating Ca2+ mobilization but with no chemotactic activity and instead acts as a selective antagonist that blocks chemotaxis induced by the monomeric form. Interacts with the N-terminus of ACKR3. Interacts with integrin subunit ITGB3 (via the allosteric site (site 2)). Interacts with TNFAIP6 (via Link domain).

Its subcellular location is the secreted. Its function is as follows. Chemoattractant active on T-lymphocytes and monocytes but not neutrophils. Activates the C-X-C chemokine receptor CXCR4 to induce a rapid and transient rise in the level of intracellular calcium ions and chemotaxis. Also binds to atypical chemokine receptor ACKR3, which activates the beta-arrestin pathway and acts as a scavenger receptor for SDF-1. Acts as a positive regulator of monocyte migration and a negative regulator of monocyte adhesion via the LYN kinase. Binds to the allosteric site (site 2) of integrins and activates integrins ITGAV:ITGB3, ITGA4:ITGB1 and ITGA5:ITGB1 in a CXCR4-independent manner. Stimulates migration of monocytes and T-lymphocytes through its receptors, CXCR4 and ACKR3, and decreases monocyte adherence to surfaces coated with ICAM-1, a ligand for beta-2 integrins. SDF1A/CXCR4 signaling axis inhibits beta-2 integrin LFA-1 mediated adhesion of monocytes to ICAM-1 through LYN kinase. Plays a protective role after myocardial infarction. Has several critical functions during embryonic development; required for B-cell lymphopoiesis, myelopoiesis in bone marrow and heart ventricular septum formation. Stimulates the proliferation of bone marrow-derived B-cell progenitors in the presence of IL7 as well as growth of stromal cell-dependent pre-B-cells. This is Stromal cell-derived factor 1 (CXCL12) from Felis catus (Cat).